The sequence spans 519 residues: Probable cytochrome P450 6g2 (519 aa).

Position 460 (cysteine 460) interacts with heme.

Belongs to the cytochrome P450 family. Requires heme as cofactor.

The protein resides in the endoplasmic reticulum membrane. It localises to the microsome membrane. In terms of biological role, may be involved in the metabolism of insect hormones and in the breakdown of synthetic insecticides. The polypeptide is Probable cytochrome P450 6g2 (Cyp6g2) (Drosophila melanogaster (Fruit fly)).